The chain runs to 160 residues: 3-hydroxyacyl-[acyl-carrier-protein] dehydratase FabZ (160 aa).

The active site involves histidine 63.

Belongs to the thioester dehydratase family. FabZ subfamily.

The protein resides in the cytoplasm. The enzyme catalyses a (3R)-hydroxyacyl-[ACP] = a (2E)-enoyl-[ACP] + H2O. Functionally, involved in unsaturated fatty acids biosynthesis. Catalyzes the dehydration of short chain beta-hydroxyacyl-ACPs and long chain saturated and unsaturated beta-hydroxyacyl-ACPs. This Xylella fastidiosa (strain 9a5c) protein is 3-hydroxyacyl-[acyl-carrier-protein] dehydratase FabZ.